Reading from the N-terminus, the 271-residue chain is tRNA pseudouridine synthase A (271 aa).

Asp52 acts as the Nucleophile in catalysis. A substrate-binding site is contributed by Tyr110.

It belongs to the tRNA pseudouridine synthase TruA family. Homodimer.

It catalyses the reaction uridine(38/39/40) in tRNA = pseudouridine(38/39/40) in tRNA. Formation of pseudouridine at positions 38, 39 and 40 in the anticodon stem and loop of transfer RNAs. This is tRNA pseudouridine synthase A from Burkholderia mallei (strain NCTC 10247).